Here is an 874-residue protein sequence, read N- to C-terminus: Alanine--tRNA ligase (874 aa).

Positions 563, 567, 665, and 669 each coordinate Zn(2+).

Belongs to the class-II aminoacyl-tRNA synthetase family. Requires Zn(2+) as cofactor.

It localises to the cytoplasm. It carries out the reaction tRNA(Ala) + L-alanine + ATP = L-alanyl-tRNA(Ala) + AMP + diphosphate. Its function is as follows. Catalyzes the attachment of alanine to tRNA(Ala) in a two-step reaction: alanine is first activated by ATP to form Ala-AMP and then transferred to the acceptor end of tRNA(Ala). Also edits incorrectly charged Ser-tRNA(Ala) and Gly-tRNA(Ala) via its editing domain. This is Alanine--tRNA ligase from Histophilus somni (strain 2336) (Haemophilus somnus).